We begin with the raw amino-acid sequence, 518 residues long: Cytokinin hydroxylase (518 aa).

A helical transmembrane segment spans residues 1 to 21; the sequence is MLLTILKSLLVIFVTTILRVL. Heme is bound at residue Cys-464.

The protein belongs to the cytochrome P450 family. Heme is required as a cofactor. In terms of tissue distribution, expressed in roots and flowers.

The protein localises to the membrane. The enzyme catalyses N(6)-(dimethylallyl)adenosine 5'-phosphate + NADPH + O2 + H(+) = 9-ribosyl-trans-zeatin 5'-phosphate + NADP(+) + H2O. The catalysed reaction is N(6)-(dimethylallyl)adenosine 5'-diphosphate + NADPH + O2 + H(+) = 9-ribosyl-trans-zeatin 5'-diphosphate + NADP(+) + H2O. It catalyses the reaction N(6)-(dimethylallyl)adenosine 5'-triphosphate + NADPH + O2 + H(+) = 9-ribosyl-trans-zeatin 5'-triphosphate + NADP(+) + H2O. Cytokinin hydroxylase that catalyzes the biosynthesis of trans-zeatin via the isopentenyladenine riboside 5'-monophosphate (iPRMP)-dependent pathway. Can use isopentenyladenosine-5'-monophosphate, isopentenyladenosine-5'-diphosphate and isopentenyladenosine-5'-triphosphate as substrate. The polypeptide is Cytokinin hydroxylase (CYP735A1) (Arabidopsis thaliana (Mouse-ear cress)).